The sequence spans 321 residues: Oxidoreductase P35 (321 aa).

The protein belongs to the Gfo/Idh/MocA family.

Its subcellular location is the cell surface. Functionally, oxidoreductase that may be involved in ulvan degradation. Ulvan is the main polysaccharide component of the Ulvales (green seaweed) cell wall. It is composed of disaccharide building blocks comprising 3-sulfated rhamnose (Rha3S) linked to D-glucuronic acid (GlcA), L-iduronic acid (IduA), or D-xylose (Xyl). In Formosa agariphila (strain DSM 15362 / KCTC 12365 / LMG 23005 / KMM 3901 / M-2Alg 35-1), this protein is Oxidoreductase P35.